Reading from the N-terminus, the 139-residue chain is D-ribose pyranase (139 aa).

Catalysis depends on histidine 20, which acts as the Proton donor. Residues aspartate 28, histidine 106, and 128-130 (YAN) each bind substrate.

The protein belongs to the RbsD / FucU family. RbsD subfamily. In terms of assembly, homodecamer.

The protein resides in the cytoplasm. The enzyme catalyses beta-D-ribopyranose = beta-D-ribofuranose. It participates in carbohydrate metabolism; D-ribose degradation; D-ribose 5-phosphate from beta-D-ribopyranose: step 1/2. Functionally, catalyzes the interconversion of beta-pyran and beta-furan forms of D-ribose. The chain is D-ribose pyranase from Aeromonas salmonicida (strain A449).